A 71-amino-acid polypeptide reads, in one-letter code: Protein CYSTEINE-RICH TRANSMEMBRANE MODULE 6 (71 aa).

The span at 1-12 (MSQYSQNQSSGA) shows a compositional bias: polar residues. Residues 1 to 36 (MSQYSQNQSSGAYPTPPVSTGPYVAPPPLGYPTNDT) form a disordered region. Residues 14–30 (PTPPVSTGPYVAPPPLG) show a composition bias toward pro residues. Residues 48–64 (SKGDGFLKGCLAAMCCC) form a helical membrane-spanning segment.

The protein belongs to the CYSTM1 family. Homodimer and heterodimers. Interacts with CYSTM7 and WIH1/CYSTM13. In terms of tissue distribution, mostly expressed in roots, stems, rosette leaves and siliques and, to a lower extent, in flowers and cauline leaves.

It is found in the cell membrane. Its subcellular location is the cytoplasm. Involved in resistance to abiotic stress. This is Protein CYSTEINE-RICH TRANSMEMBRANE MODULE 6 from Arabidopsis thaliana (Mouse-ear cress).